The primary structure comprises 281 residues: Undecaprenyl-diphosphatase (281 aa).

7 consecutive transmembrane segments (helical) span residues 49-69 (SANTFKIVIQLGSIFAAAWIF), 92-112 (LHIFIGLIPAGIMGLLFDDFI), 116-136 (LFSVPTVLIGLALGALLMIAA), 152-172 (MTYKQALIIGVAQCLALWPGF), 196-216 (TFIMAVPIMFAASAKSLASNI), 224-244 (ILFYIVGFIAAFIFGVLSIRL), and 257-277 (FAIYRLILVAVIAVLYFGFGI).

This sequence belongs to the UppP family.

Its subcellular location is the cell membrane. It carries out the reaction di-trans,octa-cis-undecaprenyl diphosphate + H2O = di-trans,octa-cis-undecaprenyl phosphate + phosphate + H(+). In terms of biological role, catalyzes the dephosphorylation of undecaprenyl diphosphate (UPP). Confers resistance to bacitracin. This Macrococcus caseolyticus (strain JCSC5402) (Macrococcoides caseolyticum) protein is Undecaprenyl-diphosphatase.